A 366-amino-acid polypeptide reads, in one-letter code: Septin-1 (366 aa).

Residues 22–295 form the Septin-type G domain; the sequence is KGFDFTLMVA…EGYRARCLQS (274 aa). Positions 32–39 are G1 motif; that stretch reads GESGLGKS. Residues 32–39, Thr66, Gly92, and 171–179 contribute to the GTP site; these read GESGLGKS and KADALMPRE. The interval 89–92 is G3 motif; it reads DTPG. The interval 170–173 is G4 motif; it reads GKAD. Ser206 is subject to Phosphoserine. GTP-binding residues include Gly229 and Arg244. At Ser247 the chain carries Phosphoserine. Residue Thr250 is modified to Phosphothreonine. Phosphoserine; by AURKB occurs at positions 306 and 314. Positions 347–366 are disordered; it reads EKMQAQMQQSQAQGEQSDVL. The span at 349–366 shows a compositional bias: low complexity; that stretch reads MQAQMQQSQAQGEQSDVL.

Belongs to the TRAFAC class TrmE-Era-EngA-EngB-Septin-like GTPase superfamily. Septin GTPase family. As to quaternary structure, septins polymerize into heterooligomeric protein complexes that form filaments, and can associate with cellular membranes, actin filaments and microtubules. GTPase activity is required for filament formation. Interacts with AURKB.

The protein localises to the cytoplasm. It localises to the cytoskeleton. Its subcellular location is the microtubule organizing center. It is found in the centrosome. The protein resides in the midbody. Functionally, filament-forming cytoskeletal GTPase. May play a role in cytokinesis (Potential). This Mus musculus (Mouse) protein is Septin-1.